Reading from the N-terminus, the 392-residue chain is Small ribosomal subunit protein bS1 (392 aa).

S1 motif domains are found at residues 16 to 90 (GDKV…LSKR), 108 to 173 (DEVI…LSRK), 194 to 262 (GDVI…LSIK), and 279 to 348 (DDVI…LSIK). Residues 361-380 (ASTTQSYLEDDNDEDKPTLG) form a disordered region.

This sequence belongs to the bacterial ribosomal protein bS1 family.

Its function is as follows. Binds mRNA; thus facilitating recognition of the initiation point. It is needed to translate mRNA with a short Shine-Dalgarno (SD) purine-rich sequence. This Staphylococcus epidermidis (strain ATCC 35984 / DSM 28319 / BCRC 17069 / CCUG 31568 / BM 3577 / RP62A) protein is Small ribosomal subunit protein bS1 (rpsA).